The sequence spans 129 residues: Putative redox protein FMP46, mitochondrial (129 aa).

A mitochondrion-targeting transit peptide spans 1–21; sequence MSMFRTLQRQPRTISLFTHDL. Residue C94 is part of the active site.

The protein belongs to the FMP46 family.

It is found in the mitochondrion. Putative mitochondrial redox protein which could be involved in the reduction of small toxic molecules. This chain is Putative redox protein FMP46, mitochondrial (FMP46), found in Candida glabrata (strain ATCC 2001 / BCRC 20586 / JCM 3761 / NBRC 0622 / NRRL Y-65 / CBS 138) (Yeast).